Consider the following 292-residue polypeptide: Syntaxin-19 (292 aa).

Basic and acidic residues predominate over residues 1-24 (MKDRLPELKQRTKETELSKDKDVP). The segment at 1–28 (MKDRLPELKQRTKETELSKDKDVPTTEA) is disordered. Positions 46–122 (VAERHLHEIQ…VKEVKKSEDE (77 aa)) form a coiled coil. A t-SNARE coiled-coil homology domain is found at 209–271 (LSEIEQRHKE…NTTKEKFGLA (63 aa)).

Belongs to the syntaxin family. Interacts with EGFR.

Its subcellular location is the cell membrane. It localises to the cytoplasm. Plays a role in endosomal trafficking of the epidermal growth factor receptor (EGFR). The polypeptide is Syntaxin-19 (STX19) (Bos taurus (Bovine)).